Reading from the N-terminus, the 423-residue chain is Serine hydroxymethyltransferase (423 aa).

Residues leucine 120 and 124–126 (GHL) each bind (6S)-5,6,7,8-tetrahydrofolate. Residue lysine 229 is modified to N6-(pyridoxal phosphate)lysine. Residues glutamate 245 and 353 to 355 (SPF) contribute to the (6S)-5,6,7,8-tetrahydrofolate site.

Belongs to the SHMT family. Homodimer. It depends on pyridoxal 5'-phosphate as a cofactor.

It localises to the cytoplasm. The catalysed reaction is (6R)-5,10-methylene-5,6,7,8-tetrahydrofolate + glycine + H2O = (6S)-5,6,7,8-tetrahydrofolate + L-serine. Its pathway is one-carbon metabolism; tetrahydrofolate interconversion. It participates in amino-acid biosynthesis; glycine biosynthesis; glycine from L-serine: step 1/1. Functionally, catalyzes the reversible interconversion of serine and glycine with tetrahydrofolate (THF) serving as the one-carbon carrier. This reaction serves as the major source of one-carbon groups required for the biosynthesis of purines, thymidylate, methionine, and other important biomolecules. Also exhibits THF-independent aldolase activity toward beta-hydroxyamino acids, producing glycine and aldehydes, via a retro-aldol mechanism. This Prochlorococcus marinus (strain MIT 9312) protein is Serine hydroxymethyltransferase.